We begin with the raw amino-acid sequence, 244 residues long: Phosphoribosyl isomerase A (244 aa).

The Proton acceptor role is filled by Asp10. Catalysis depends on Asp129, which acts as the Proton donor.

The protein belongs to the HisA/HisF family.

Its subcellular location is the cytoplasm. The catalysed reaction is 1-(5-phospho-beta-D-ribosyl)-5-[(5-phospho-beta-D-ribosylamino)methylideneamino]imidazole-4-carboxamide = 5-[(5-phospho-1-deoxy-D-ribulos-1-ylimino)methylamino]-1-(5-phospho-beta-D-ribosyl)imidazole-4-carboxamide. The enzyme catalyses N-(5-phospho-beta-D-ribosyl)anthranilate = 1-(2-carboxyphenylamino)-1-deoxy-D-ribulose 5-phosphate. It participates in amino-acid biosynthesis; L-histidine biosynthesis; L-histidine from 5-phospho-alpha-D-ribose 1-diphosphate: step 4/9. The protein operates within amino-acid biosynthesis; L-tryptophan biosynthesis; L-tryptophan from chorismate: step 3/5. Functionally, involved in both the histidine and tryptophan biosynthetic pathways. The sequence is that of Phosphoribosyl isomerase A from Mycobacterium ulcerans (strain Agy99).